The sequence spans 161 residues: Pathogenesis-related protein 1 (161 aa).

The signal sequence occupies residues 1 to 26; it reads MNFTGYSRFLIVFVALVGALVLPSKA. An SCP domain is found at 34-149; sequence LRVHNQARGA…NGGTIISCNY (116 aa). Intrachain disulfides connect C70/C138, C113/C117, and C133/C147.

The protein belongs to the CRISP family.

It localises to the secreted. It is found in the extracellular space. Its subcellular location is the apoplast. Its function is as follows. Partially responsible for acquired pathogen resistance. In Arabidopsis thaliana (Mouse-ear cress), this protein is Pathogenesis-related protein 1.